The sequence spans 218 residues: MADEVILLDFWASMFGMRTRIALAEKRVKYDHREEDLWNKSSLLLEMNPVHKKIPVLIHNGKPVCESLIQIEYIDETWPDNNPLLPSDPYKRAHAKFWADFIDKKVNVTARRIWAVKGEEQEAAKELIEILKTLESELGDKKYFGDETFGYVDIALIGFHSWFAVYEKFGNVSIESECSKLVAWAKRCLERESVAKALPESEKVITFISERRKKLGLE.

One can recognise a GST N-terminal domain in the interval 3–82; sequence DEVILLDFWA…YIDETWPDNN (80 aa). Glutathione is bound by residues 13–14, 39–40, 53–54, and 66–67; these read SM, NK, KI, and ES. The GST C-terminal domain maps to 88–215; the sequence is DPYKRAHAKF…TFISERRKKL (128 aa). The residue at position 148 (threonine 148) is a Phosphothreonine.

The protein belongs to the GST superfamily. Tau family.

It localises to the cytoplasm. The protein resides in the cytosol. It carries out the reaction RX + glutathione = an S-substituted glutathione + a halide anion + H(+). Its function is as follows. May be involved in the conjugation of reduced glutathione to a wide number of exogenous and endogenous hydrophobic electrophiles and have a detoxification role against certain herbicides. This chain is Glutathione S-transferase U24 (GSTU24), found in Arabidopsis thaliana (Mouse-ear cress).